We begin with the raw amino-acid sequence, 274 residues long: NH(3)-dependent NAD(+) synthetase (274 aa).

46–53 (GISGGQDS) is a binding site for ATP. Position 52 (Asp-52) interacts with Mg(2+). Arg-140 lines the deamido-NAD(+) pocket. Thr-160 provides a ligand contact to ATP. Residue Glu-165 coordinates Mg(2+). Residues Lys-173 and Asp-180 each coordinate deamido-NAD(+). ATP contacts are provided by Lys-189 and Thr-211. 260–261 (HK) is a binding site for deamido-NAD(+).

The protein belongs to the NAD synthetase family. Homodimer.

It catalyses the reaction deamido-NAD(+) + NH4(+) + ATP = AMP + diphosphate + NAD(+) + H(+). It participates in cofactor biosynthesis; NAD(+) biosynthesis; NAD(+) from deamido-NAD(+) (ammonia route): step 1/1. In terms of biological role, catalyzes the ATP-dependent amidation of deamido-NAD to form NAD. Uses ammonia as a nitrogen source. This Nocardia farcinica (strain IFM 10152) protein is NH(3)-dependent NAD(+) synthetase.